A 274-amino-acid polypeptide reads, in one-letter code: Exosome complex component Rrp42 (274 aa).

It belongs to the RNase PH family. Rrp42 subfamily. As to quaternary structure, component of the archaeal exosome complex. Forms a hexameric ring-like arrangement composed of 3 Rrp41-Rrp42 heterodimers. The hexameric ring associates with a trimer of Rrp4 and/or Csl4 subunits.

It is found in the cytoplasm. Functionally, non-catalytic component of the exosome, which is a complex involved in RNA degradation. Contributes to the structuring of the Rrp41 active site. This chain is Exosome complex component Rrp42, found in Pyrococcus abyssi (strain GE5 / Orsay).